The following is a 135-amino-acid chain: Large ribosomal subunit protein eL32 (135 aa).

The tract at residues 51 to 77 (GRDNKFRLKMKGKPRPPEPGYRSPRKV) is disordered.

The protein belongs to the eukaryotic ribosomal protein eL32 family.

This Nanoarchaeum equitans (strain Kin4-M) protein is Large ribosomal subunit protein eL32 (rpl32e).